Reading from the N-terminus, the 71-residue chain is uncharacterized protein (71 aa).

Residues 5–22 (VVMCSGLFCSVFAGAFML) traverse the membrane as a helical segment.

The protein localises to the membrane. This is an uncharacterized protein from Bacillus subtilis (strain 168).